Consider the following 459-residue polypeptide: tRNA modification GTPase MnmE (459 aa).

(6S)-5-formyl-5,6,7,8-tetrahydrofolate is bound by residues arginine 20, glutamate 85, and arginine 124. One can recognise a TrmE-type G domain in the interval 221–380 (GLSTVIIGRP…LEEAIQSLFY (160 aa)). Asparagine 231 contacts K(+). GTP-binding positions include 231 to 236 (NVGKSS), 250 to 256 (TDIPGTT), and 275 to 278 (DTAG). Mg(2+) is bound at residue serine 235. Positions 250, 252, and 255 each coordinate K(+). Threonine 256 contributes to the Mg(2+) binding site. Residue lysine 459 coordinates (6S)-5-formyl-5,6,7,8-tetrahydrofolate.

This sequence belongs to the TRAFAC class TrmE-Era-EngA-EngB-Septin-like GTPase superfamily. TrmE GTPase family. In terms of assembly, homodimer. Heterotetramer of two MnmE and two MnmG subunits. Requires K(+) as cofactor.

It is found in the cytoplasm. Functionally, exhibits a very high intrinsic GTPase hydrolysis rate. Involved in the addition of a carboxymethylaminomethyl (cmnm) group at the wobble position (U34) of certain tRNAs, forming tRNA-cmnm(5)s(2)U34. This Bacillus velezensis (strain DSM 23117 / BGSC 10A6 / LMG 26770 / FZB42) (Bacillus amyloliquefaciens subsp. plantarum) protein is tRNA modification GTPase MnmE.